An 81-amino-acid chain; its full sequence is MAGSTGERPFVDIITSVRYWVIHALTIPALFLAGWLFVSTGLAYDIFGTPRPNEYFTAERQELPIVSDRFNALEELERLTR.

The chain crosses the membrane as a helical span at residues 21 to 35 (VIHALTIPALFLAGW). His-23 contributes to the heme binding site.

It belongs to the PsbE/PsbF family. As to quaternary structure, heterodimer of an alpha subunit and a beta subunit. PSII is composed of 1 copy each of membrane proteins PsbA, PsbB, PsbC, PsbD, PsbE, PsbF, PsbH, PsbI, PsbJ, PsbK, PsbL, PsbM, PsbT, PsbX, PsbY, PsbZ, Psb30/Ycf12, peripheral proteins PsbO, CyanoQ (PsbQ), PsbU, PsbV and a large number of cofactors. It forms dimeric complexes. Requires heme b as cofactor.

It is found in the cellular thylakoid membrane. In terms of biological role, this b-type cytochrome is tightly associated with the reaction center of photosystem II (PSII). PSII is a light-driven water:plastoquinone oxidoreductase that uses light energy to abstract electrons from H(2)O, generating O(2) and a proton gradient subsequently used for ATP formation. It consists of a core antenna complex that captures photons, and an electron transfer chain that converts photonic excitation into a charge separation. This chain is Cytochrome b559 subunit alpha, found in Synechococcus sp. (strain JA-2-3B'a(2-13)) (Cyanobacteria bacterium Yellowstone B-Prime).